The primary structure comprises 150 residues: Anti-sigma F factor (150 aa).

It belongs to the anti-sigma-factor family.

It catalyses the reaction L-seryl-[protein] + ATP = O-phospho-L-seryl-[protein] + ADP + H(+). The catalysed reaction is L-threonyl-[protein] + ATP = O-phospho-L-threonyl-[protein] + ADP + H(+). In terms of biological role, binds to sigma F and blocks its ability to form an RNA polymerase holoenzyme (E-sigma F). Phosphorylates SpoIIAA on a serine residue. This phosphorylation may enable SpoIIAA to act as an anti-anti-sigma factor that counteracts SpoIIAB and thus releases sigma F from inhibition. This Pasteuria penetrans protein is Anti-sigma F factor.